A 122-amino-acid polypeptide reads, in one-letter code: FMN-binding protein (122 aa).

As to quaternary structure, monomer and homodimer. Requires FMN as cofactor.

It localises to the cytoplasm. Its function is as follows. Functions as a redox protein with a potential of -325 mV. The chain is FMN-binding protein from Nitratidesulfovibrio vulgaris (strain DSM 19637 / Miyazaki F) (Desulfovibrio vulgaris).